The chain runs to 384 residues: MATQDFYQVLGVSKDANERDIKKAYKRMAMKYHPDRTEGDKDMEIKFKEIKQAYEVLSDPQKRQMYDQYGHEAFEQARQGGAGHGAGGFGGGGADFADIFGDVFGDIFGGGRRQQARAQRGADLRYNLDMSLEEAVRGKTVELEIPTLVECRDCNGSGAKKGSKPQTCGHCHGSGQIQMRQGFFAVQQTCPQCRGTGTIIKDPCRTCHGHGRKEETKTLSVKIPAGVDTGDRIRLANEGEAGEHGAPAGDLYVQVHVREHPIFARDGNNLFCEVPVSFTKAALGGDIEVPTLEGKVKLKVPKETQTGKHFRLRGKGVKSVRTGEVGDLICKVMIETPVNLSSKQRDMLEELEDSMGTGDEAAKFRPKEKGFFDGVKQFFDDLRS.

A J domain is found at 5-70 (DFYQVLGVSK…QKRQMYDQYG (66 aa)). Residues 138–216 (GKTVELEIPT…CHGHGRKEET (79 aa)) form a CR-type zinc finger. C151, C154, C168, C171, C190, C193, C204, and C207 together coordinate Zn(2+). CXXCXGXG motif repeat units follow at residues 151-158 (CRDCNGSG), 168-175 (CGHCHGSG), 190-197 (CPQCRGTG), and 204-211 (CRTCHGHG).

It belongs to the DnaJ family. As to quaternary structure, homodimer. The cofactor is Zn(2+).

The protein localises to the cytoplasm. Its function is as follows. Participates actively in the response to hyperosmotic and heat shock by preventing the aggregation of stress-denatured proteins and by disaggregating proteins, also in an autonomous, DnaK-independent fashion. Unfolded proteins bind initially to DnaJ; upon interaction with the DnaJ-bound protein, DnaK hydrolyzes its bound ATP, resulting in the formation of a stable complex. GrpE releases ADP from DnaK; ATP binding to DnaK triggers the release of the substrate protein, thus completing the reaction cycle. Several rounds of ATP-dependent interactions between DnaJ, DnaK and GrpE are required for fully efficient folding. Also involved, together with DnaK and GrpE, in the DNA replication of plasmids through activation of initiation proteins. The chain is Chaperone protein DnaJ from Idiomarina loihiensis (strain ATCC BAA-735 / DSM 15497 / L2-TR).